Reading from the N-terminus, the 450-residue chain is Asparagine--tRNA ligase (450 aa).

This sequence belongs to the class-II aminoacyl-tRNA synthetase family. As to quaternary structure, homodimer.

The protein resides in the cytoplasm. It carries out the reaction tRNA(Asn) + L-asparagine + ATP = L-asparaginyl-tRNA(Asn) + AMP + diphosphate + H(+). The protein is Asparagine--tRNA ligase of Enterococcus faecalis (strain ATCC 700802 / V583).